The sequence spans 711 residues: Polyribonucleotide nucleotidyltransferase (711 aa).

Mg(2+)-binding residues include Asp-486 and Asp-492. The KH domain occupies 553-612; it reads PRIHTIKINPDKIKDVIGKGGSVIRALTEETGTTIEIEDDGTVKIAATDGEKAKHAIRRI. The 69-residue stretch at 622–690 folds into the S1 motif domain; it reads GRVYNGKVTR…RQGRIRLSIK (69 aa). The interval 690-711 is disordered; it reads KEATEQSQPAAALEAPAAEQGE. A compositionally biased stretch (low complexity) spans 698–711; sequence PAAALEAPAAEQGE.

It belongs to the polyribonucleotide nucleotidyltransferase family. In terms of assembly, component of the RNA degradosome, which is a multiprotein complex involved in RNA processing and mRNA degradation. Requires Mg(2+) as cofactor.

The protein localises to the cytoplasm. It carries out the reaction RNA(n+1) + phosphate = RNA(n) + a ribonucleoside 5'-diphosphate. In terms of biological role, involved in mRNA degradation. Catalyzes the phosphorolysis of single-stranded polyribonucleotides processively in the 3'- to 5'-direction. This chain is Polyribonucleotide nucleotidyltransferase, found in Escherichia coli O127:H6 (strain E2348/69 / EPEC).